Here is a 305-residue protein sequence, read N- to C-terminus: Sulfate adenylyltransferase subunit 2 (305 aa).

The protein belongs to the PAPS reductase family. CysD subfamily. As to quaternary structure, heterodimer composed of CysD, the smaller subunit, and CysN.

It carries out the reaction sulfate + ATP + H(+) = adenosine 5'-phosphosulfate + diphosphate. It participates in sulfur metabolism; hydrogen sulfide biosynthesis; sulfite from sulfate: step 1/3. With CysN forms the ATP sulfurylase (ATPS) that catalyzes the adenylation of sulfate producing adenosine 5'-phosphosulfate (APS) and diphosphate, the first enzymatic step in sulfur assimilation pathway. APS synthesis involves the formation of a high-energy phosphoric-sulfuric acid anhydride bond driven by GTP hydrolysis by CysN coupled to ATP hydrolysis by CysD. The chain is Sulfate adenylyltransferase subunit 2 from Pseudomonas aeruginosa (strain LESB58).